Here is a 321-residue protein sequence, read N- to C-terminus: Lipoyl synthase (321 aa).

[4Fe-4S] cluster-binding residues include C68, C73, C79, C94, C98, C101, and S308. Positions 80–297 (FNHGTATFMI…KAEAMAMGFT (218 aa)) constitute a Radical SAM core domain.

This sequence belongs to the radical SAM superfamily. Lipoyl synthase family. The cofactor is [4Fe-4S] cluster.

The protein localises to the cytoplasm. It catalyses the reaction [[Fe-S] cluster scaffold protein carrying a second [4Fe-4S](2+) cluster] + N(6)-octanoyl-L-lysyl-[protein] + 2 oxidized [2Fe-2S]-[ferredoxin] + 2 S-adenosyl-L-methionine + 4 H(+) = [[Fe-S] cluster scaffold protein] + N(6)-[(R)-dihydrolipoyl]-L-lysyl-[protein] + 4 Fe(3+) + 2 hydrogen sulfide + 2 5'-deoxyadenosine + 2 L-methionine + 2 reduced [2Fe-2S]-[ferredoxin]. The protein operates within protein modification; protein lipoylation via endogenous pathway; protein N(6)-(lipoyl)lysine from octanoyl-[acyl-carrier-protein]: step 2/2. Functionally, catalyzes the radical-mediated insertion of two sulfur atoms into the C-6 and C-8 positions of the octanoyl moiety bound to the lipoyl domains of lipoate-dependent enzymes, thereby converting the octanoylated domains into lipoylated derivatives. The protein is Lipoyl synthase of Yersinia enterocolitica serotype O:8 / biotype 1B (strain NCTC 13174 / 8081).